A 79-amino-acid chain; its full sequence is Small ribosomal subunit protein bS18 (79 aa).

It belongs to the bacterial ribosomal protein bS18 family. In terms of assembly, part of the 30S ribosomal subunit. Forms a tight heterodimer with protein bS6.

In terms of biological role, binds as a heterodimer with protein bS6 to the central domain of the 16S rRNA, where it helps stabilize the platform of the 30S subunit. The protein is Small ribosomal subunit protein bS18 of Salinispora arenicola (strain CNS-205).